A 197-amino-acid chain; its full sequence is Dehydrin DHN1 (197 aa).

Polar residues predominate over residues 1–14; that stretch reads MSQYQNQYGAQTGM. 2 disordered regions span residues 1–86 and 133–197; these read MSQY…GTNP and GTEQ…CTGH. 2 tandem repeats follow at residues 16–21 and 26–31. The tract at residues 16–31 is 2 X approximate repeats; sequence DEYGNPVNQVDQYGNP. Residues 74–83 show a composition bias toward gly residues; it reads THTGGVGGYG. Residues 126-133 form a 2-1 repeat; it reads KIKEKIPG. Residues 126 to 190 are 2 X approximate repeats; sequence KIKEKIPGTE…MDKIKEKLPG (65 aa). The segment covering 144 to 160 has biased composition (gly residues); the sequence is AGYGSTGYGASGGGIGN. Residues 165–188 are compositionally biased toward basic and acidic residues; sequence YVREEHRVDHGEKKGIMDKIKEKL. Residues 183–190 form a 2-2 repeat; it reads KIKEKLPG.

The protein belongs to the plant dehydrin family. In terms of tissue distribution, shoots, roots, and cotyledon from dehydrating seedlings.

The polypeptide is Dehydrin DHN1 (DHN1) (Pisum sativum (Garden pea)).